We begin with the raw amino-acid sequence, 906 residues long: MEESPPKQKSNTKVAQHEGQQDLNTTRHMNVELKHRPKLERHLKLGMIPVVYMKQREEILYPAQSLKEENLIQNFTSLPLLQKLCPKDPENMVRKSWASCIPEEGGHMINIQDLFGPNIGTQKEPQLVIIEGAAGIGKSTLARLVKRAWKEGQLYRDHFQHVFFFSCRELAQCKKLSLAELIAQGQEVPTAPINQILSHPEKLLFILDGIDEPAWVLADQNPELCLHWSQRQPVHTLLGSLLGKSILPEAFFLLTTRTTALQKFIPSLPMPCQVEVLGFSGIEWENYFYKYFANQRHAITAFMMVESNPVLLTLCEVPWVCWLVCTCLKKQMKQGRVLSLKSQTTTALCLKYLSLTIPDKHRRTQVKALCSLAAEGIWKRRTLFSESDLCKQGLDEDAVATFLKTGVLQKQASSLSYSFAHLCLQEFFAAISCILEDSEERHGNMEMDRIVETLVERYGRQNLFEAPTVRFLFGLLGKEGVKGMEKLFSCSLPGKTKLKLLWHILGKSQPHQPPCLGLLHCLYENQDMELLTHVMHDLQGTIVPGPNDIAHTVLQTNVKQLVVQTDMELMVATFCIQFYCHVRTLQLNMEKQQGYALTSPRMVLYRWTPITNASWEILFYNLKFTRNLEGLDLSGNSLRYSVVQSLCNTLRYPGCQLKTLWLVKCGLTSRYCSLLASVLSAHSSLTELYLQLNDLGDDGVRMLCEGLRNPVCNLSILWLDLSSLSAQVITELRTLEEKNPKLYIRSIWMPHMMVPTENMDEEAILTTFKQQRQESGDKPMEILGTEEDFWGPTGPVATELVDRVRNLYRVQLPMAGSYHCPSTGLHFVVTRAVTIEIEFCAWSQFLDKTPLQQSHMVVGPLFDIKAEQGAVTAVYLPHFVSLKDTEASTFDFKVTHFQEHGSRNAR.

The tract at residues 1–22 is disordered; the sequence is MEESPPKQKSNTKVAQHEGQQD. An NACHT domain is found at 126 to 435; the sequence is QLVIIEGAAG…EFFAAISCIL (310 aa). 132–139 is an ATP binding site; it reads GAAGIGKS. LRR repeat units lie at residues 627–647 and 684–704; these read NLEGLDLSGNSLRYSVVQSLC and SLTELYLQLNDLGDDGVRMLC. Residues 789–906 form the FIIND (incomplete) domain; it reads FWGPTGPVAT…FQEHGSRNAR (118 aa).

This sequence belongs to the NLRP family. Expressed in macrophages.

It localises to the cytoplasm. The protein localises to the cytosol. Its function is as follows. Probable inactive allele of Nlrp1b, which lacks a CARD domain, suggesting that it is not able to form an inflammasome. Contrary to Nlrp1b allele 1, allele 4 is not activated by B.anthracis lethal toxin and no other activation signal is reported. This is NACHT, LRR and PYD domains-containing protein 1b allele 4 from Mus musculus (Mouse).